Reading from the N-terminus, the 169-residue chain is MSKKIAVLVTDQFEDIEYTSPVKAYEEAGYSVVAIDLEAGKEVTGKHGEKVKIDKAISDVDASDFDALLIPGGFSPDLLRADDRPGEFAKAFVENKKPVFAICHGPQVLIDTDLLKGKDITGYRSIRKDLINAGANYKDAEVVVSHNIVTSRTPDDLEAFNRESLNLLK.

In terms of domain architecture, PfpI endopeptidase spans 3–169 (KKIAVLVTDQ…FNRESLNLLK (167 aa)). The active-site Nucleophile is the cysteine 103. Residue histidine 104 is part of the active site.

It belongs to the peptidase C56 family.

Its function is as follows. Functions in the protection against aldehyde-stress, possibly by degrading damaged proteins. This chain is Putative cysteine protease YraA (yraA), found in Bacillus subtilis (strain 168).